A 307-amino-acid chain; its full sequence is D-alanine--D-alanine ligase (307 aa).

The region spanning 101 to 301 (KTVMRAAGVD…FGELVRWMVE (201 aa)) is the ATP-grasp domain. Position 127–182 (127–182 (PLPPPYVVKPIAEGSSVGVIIVRDGRSHPPQILASEEWTFGEQVLAEPYIAGRELT)) interacts with ATP. Mg(2+) is bound by residues D251, E268, and N270.

The protein belongs to the D-alanine--D-alanine ligase family. It depends on Mg(2+) as a cofactor. Requires Mn(2+) as cofactor.

It is found in the cytoplasm. The catalysed reaction is 2 D-alanine + ATP = D-alanyl-D-alanine + ADP + phosphate + H(+). The protein operates within cell wall biogenesis; peptidoglycan biosynthesis. Cell wall formation. The sequence is that of D-alanine--D-alanine ligase from Methylobacterium radiotolerans (strain ATCC 27329 / DSM 1819 / JCM 2831 / NBRC 15690 / NCIMB 10815 / 0-1).